The chain runs to 203 residues: Histidine biosynthesis bifunctional protein HisIE (203 aa).

A phosphoribosyl-AMP cyclohydrolase region spans residues 1–114 (MLTEQQRREL…FGDTAHQWLF (114 aa)). The interval 115 to 203 (LYQLEQLLAE…VIENLRKRHQ (89 aa)) is phosphoribosyl-ATP pyrophosphohydrolase.

This sequence in the N-terminal section; belongs to the PRA-CH family. It in the C-terminal section; belongs to the PRA-PH family.

The protein resides in the cytoplasm. The enzyme catalyses 1-(5-phospho-beta-D-ribosyl)-ATP + H2O = 1-(5-phospho-beta-D-ribosyl)-5'-AMP + diphosphate + H(+). It catalyses the reaction 1-(5-phospho-beta-D-ribosyl)-5'-AMP + H2O = 1-(5-phospho-beta-D-ribosyl)-5-[(5-phospho-beta-D-ribosylamino)methylideneamino]imidazole-4-carboxamide. It participates in amino-acid biosynthesis; L-histidine biosynthesis; L-histidine from 5-phospho-alpha-D-ribose 1-diphosphate: step 2/9. The protein operates within amino-acid biosynthesis; L-histidine biosynthesis; L-histidine from 5-phospho-alpha-D-ribose 1-diphosphate: step 3/9. The polypeptide is Histidine biosynthesis bifunctional protein HisIE (Shigella sonnei (strain Ss046)).